The following is a 378-amino-acid chain: Quinolinate synthase (378 aa).

Positions 59 and 80 each coordinate iminosuccinate. Cys-125 is a [4Fe-4S] cluster binding site. Residues 151–153 (YAN) and Ser-168 contribute to the iminosuccinate site. Residue Cys-212 participates in [4Fe-4S] cluster binding. Iminosuccinate contacts are provided by residues 238 to 240 (HPE) and Thr-255. [4Fe-4S] cluster is bound at residue Cys-309.

The protein belongs to the quinolinate synthase family. Type 1 subfamily. It depends on [4Fe-4S] cluster as a cofactor.

Its subcellular location is the cytoplasm. It carries out the reaction iminosuccinate + dihydroxyacetone phosphate = quinolinate + phosphate + 2 H2O + H(+). Its pathway is cofactor biosynthesis; NAD(+) biosynthesis; quinolinate from iminoaspartate: step 1/1. Functionally, catalyzes the condensation of iminoaspartate with dihydroxyacetone phosphate to form quinolinate. The polypeptide is Quinolinate synthase (Burkholderia orbicola (strain MC0-3)).